The sequence spans 150 residues: MLLDDLYEIVEPITADLGYILWGIEVVGSGKLTIRIFIDHENGVSVDDCQIVSKEISAVFDVEDPVSGKYILEVSSPGMNRQIFNIIQAQALVGFNVKAVTLAPVGSQTKFKGVLERVEGNNVILNLEDGKEISFDFDELKKLRVSPDFS.

The protein belongs to the RimP family.

The protein localises to the cytoplasm. In terms of biological role, required for maturation of 30S ribosomal subunits. This Francisella tularensis subsp. holarctica (strain LVS) protein is Ribosome maturation factor RimP.